Consider the following 911-residue polypeptide: Probable dipeptidyl-aminopeptidase B (911 aa).

The interval 1–39 is disordered; that stretch reads MPRPRAAKEEETELLAQHQESPRPSSDGSEASASSISTT. Topologically, residues 1–97 are cytoplasmic; it reads MPRPRAAKEE…TPVDKKARRT (97 aa). Over residues 25–39 the composition is skewed to low complexity; sequence SSDGSEASASSISTT. Residues 98–118 form a helical; Signal-anchor for type II membrane protein membrane-spanning segment; sequence LWIVGTICAVGWALALVSFLM. The Vacuolar portion of the chain corresponds to 119 to 911; that stretch reads NGNYKHSSTR…AQADARSLGR (793 aa). 2 N-linked (GlcNAc...) asparagine glycosylation sites follow: asparagine 268 and asparagine 564. The Charge relay system role is filled by serine 755. Asparagine 809 carries an N-linked (GlcNAc...) asparagine glycan. Catalysis depends on charge relay system residues aspartate 832 and histidine 865.

Belongs to the peptidase S9B family.

It localises to the vacuole membrane. The catalysed reaction is Release of an N-terminal dipeptide, Xaa-Yaa-|-Zaa-, from a polypeptide, preferentially when Yaa is Pro, provided Zaa is neither Pro nor hydroxyproline.. Its function is as follows. Type IV dipeptidyl-peptidase which removes N-terminal dipeptides sequentially from polypeptides having unsubstituted N-termini provided that the penultimate residue is proline. This Phaeosphaeria nodorum (strain SN15 / ATCC MYA-4574 / FGSC 10173) (Glume blotch fungus) protein is Probable dipeptidyl-aminopeptidase B (DAPB).